A 217-amino-acid chain; its full sequence is Probable transaldolase (217 aa).

Lys-83 functions as the Schiff-base intermediate with substrate in the catalytic mechanism.

Belongs to the transaldolase family. Type 3B subfamily.

The protein localises to the cytoplasm. The catalysed reaction is D-sedoheptulose 7-phosphate + D-glyceraldehyde 3-phosphate = D-erythrose 4-phosphate + beta-D-fructose 6-phosphate. Its pathway is carbohydrate degradation; pentose phosphate pathway; D-glyceraldehyde 3-phosphate and beta-D-fructose 6-phosphate from D-ribose 5-phosphate and D-xylulose 5-phosphate (non-oxidative stage): step 2/3. Its function is as follows. Transaldolase is important for the balance of metabolites in the pentose-phosphate pathway. The protein is Probable transaldolase (tal) of Aquifex aeolicus (strain VF5).